The following is a 422-amino-acid chain: MTRRVAVTGIGVVAPGGIGVPAFWDLLSSGRTATRGITLFDPEGLRSRIAAECDFDPLAHGLDPELVERADRYIQFALVAADEAVTDSGIDFGTENPWRVAVSLGSAVGGTTRLEHDYVLVSERGQRWDVDHRAAEPELHRAFSPSTLAADVAERFGAQGPVQTVSTGCTSGLDAVGYAFHTIEEGRADVCIAGASDSPISPITMACFDAIKATSPNNDDPEHASRPFDAHRDGFVMGEGAAVLVLEELEHARARGAHVYCEIGGYATFGNAYHMTGLTSEGLEMARAIDVALDHARVDPTDIDYVNAHGSGTRQNDRHETAAVKKSLGAHAYDTPMSSIKSMVGHSLGAIGAIEVVACVLALARQVVPPTANYETPDPECDLDYVPRTARPRRLDHVLSVGSGFGGFQSAVLLTGPAGRKR.

In terms of domain architecture, Ketosynthase family 3 (KS3) spans 2–416 (TRRVAVTGIG…GFQSAVLLTG (415 aa)). Residues C169, H309, and H346 each act as for beta-ketoacyl synthase activity in the active site.

The protein belongs to the thiolase-like superfamily. Beta-ketoacyl-ACP synthases family.

It participates in antibiotic biosynthesis; curamycin biosynthesis. This Streptomyces cyaneus (Streptomyces curacoi) protein is Putative polyketide beta-ketoacyl synthase 1 (curA).